The chain runs to 258 residues: Phosphoribosylaminoimidazole-succinocarboxamide synthase (258 aa).

This sequence belongs to the SAICAR synthetase family.

The enzyme catalyses 5-amino-1-(5-phospho-D-ribosyl)imidazole-4-carboxylate + L-aspartate + ATP = (2S)-2-[5-amino-1-(5-phospho-beta-D-ribosyl)imidazole-4-carboxamido]succinate + ADP + phosphate + 2 H(+). The protein operates within purine metabolism; IMP biosynthesis via de novo pathway; 5-amino-1-(5-phospho-D-ribosyl)imidazole-4-carboxamide from 5-amino-1-(5-phospho-D-ribosyl)imidazole-4-carboxylate: step 1/2. This Sphingopyxis alaskensis (strain DSM 13593 / LMG 18877 / RB2256) (Sphingomonas alaskensis) protein is Phosphoribosylaminoimidazole-succinocarboxamide synthase.